A 291-amino-acid chain; its full sequence is Elongation factor Ts (291 aa).

The involved in Mg(2+) ion dislocation from EF-Tu stretch occupies residues 79-82 (TDFV).

It belongs to the EF-Ts family.

It localises to the cytoplasm. Functionally, associates with the EF-Tu.GDP complex and induces the exchange of GDP to GTP. It remains bound to the aminoacyl-tRNA.EF-Tu.GTP complex up to the GTP hydrolysis stage on the ribosome. This Dinoroseobacter shibae (strain DSM 16493 / NCIMB 14021 / DFL 12) protein is Elongation factor Ts.